The primary structure comprises 182 residues: Ribulose bisphosphate carboxylase small subunit, chloroplastic (182 aa).

The transit peptide at 1–58 directs the protein to the chloroplast; sequence MASSMLSTATVASINRVSPAQATMVAPFTGLKSTPVFPTTRKTNSDITSITSNGGKVQ.

Belongs to the RuBisCO small chain family. Heterohexadecamer of 8 large and 8 small subunits.

The protein localises to the plastid. The protein resides in the chloroplast. In terms of biological role, ruBisCO catalyzes two reactions: the carboxylation of D-ribulose 1,5-bisphosphate, the primary event in carbon dioxide fixation, as well as the oxidative fragmentation of the pentose substrate. Both reactions occur simultaneously and in competition at the same active site. Although the small subunit is not catalytic it is essential for maximal activity. The protein is Ribulose bisphosphate carboxylase small subunit, chloroplastic of Manihot esculenta (Cassava).